The chain runs to 129 residues: Snaclec coagulation factor IX/factor X-binding protein subunit B3 (129 aa).

Positions 1–8 are cleaved as a signal peptide; it reads LSLSGTAA. Intrachain disulfides connect Cys-10/Cys-21, Cys-38/Cys-127, and Cys-104/Cys-119. The 112-residue stretch at 17–128 folds into the C-type lectin domain; sequence YEGHCYKPFN…CRMMANFVCE (112 aa).

This sequence belongs to the snaclec family. In terms of assembly, heterodimer of subunits A and B3; disulfide-linked. Expressed by the venom gland.

The protein localises to the secreted. Functionally, anticoagulant protein which binds to the gamma-carboxyglutamic acid-domain regions of factors IX (F9) and factor X (F10) in the presence of calcium with a 1 to 1 stoichiometry. The protein is Snaclec coagulation factor IX/factor X-binding protein subunit B3 of Trimeresurus stejnegeri (Chinese green tree viper).